A 475-amino-acid chain; its full sequence is Exodeoxyribonuclease 7 large subunit (475 aa).

The tract at residues 452–475 (DHGLNRSSKSKRIKSKQDDQGTLF) is disordered. Basic and acidic residues predominate over residues 466-475 (SKQDDQGTLF).

It belongs to the XseA family. As to quaternary structure, heterooligomer composed of large and small subunits.

It is found in the cytoplasm. The enzyme catalyses Exonucleolytic cleavage in either 5'- to 3'- or 3'- to 5'-direction to yield nucleoside 5'-phosphates.. Bidirectionally degrades single-stranded DNA into large acid-insoluble oligonucleotides, which are then degraded further into small acid-soluble oligonucleotides. This is Exodeoxyribonuclease 7 large subunit from Bartonella quintana (strain Toulouse) (Rochalimaea quintana).